Here is a 124-residue protein sequence, read N- to C-terminus: Small ribosomal subunit protein uS12 (124 aa).

Asp-89 is subject to 3-methylthioaspartic acid.

It belongs to the universal ribosomal protein uS12 family. Part of the 30S ribosomal subunit. Contacts proteins S8 and S17. May interact with IF1 in the 30S initiation complex.

With S4 and S5 plays an important role in translational accuracy. In terms of biological role, interacts with and stabilizes bases of the 16S rRNA that are involved in tRNA selection in the A site and with the mRNA backbone. Located at the interface of the 30S and 50S subunits, it traverses the body of the 30S subunit contacting proteins on the other side and probably holding the rRNA structure together. The combined cluster of proteins S8, S12 and S17 appears to hold together the shoulder and platform of the 30S subunit. The polypeptide is Small ribosomal subunit protein uS12 (Erwinia tasmaniensis (strain DSM 17950 / CFBP 7177 / CIP 109463 / NCPPB 4357 / Et1/99)).